Here is a 574-residue protein sequence, read N- to C-terminus: Developmental and secondary metabolism regulator veA (574 aa).

Disordered stretches follow at residues 1-22, 39-60, 255-500, and 513-548; these read MATRAPLAPPPNETEASVSRIT, ERARACGAGAKSSADRRPVDPP, RSSD…GAGK, and RSYEDSFGHDDRPLYNGMRPDTESHPRRLSDAGRNF. The Velvet domain maps to 25-230; the sequence is GKKLTYKLNV…AEQGCRVRIR (206 aa). The short motif at 39-44 is the Nuclear localization signal element; the sequence is ERARAC. Pro residues-rich tracts occupy residues 314 to 323 and 330 to 341; these read RPMPPAPVPA and PAPPAPPAPPSH. 4 stretches are compositionally biased toward polar residues: residues 343–359, 385–394, 402–415, and 448–458; these read PGYQSHLSFGSTQTQYP, HARNPSTSAE, YPSSRVSTERSSYP, and VAQSAGPRSQT. The interval 457–501 is PEST; it reads QTPSSSLVPSLPPLKALSGDYPNNLSQPSSSISQSPSHDLGAGKK. Composition is skewed to low complexity over residues 459 to 474 and 482 to 493; these read PSSSLVPSLPPLKALS and SQPSSSISQSPS. Basic and acidic residues-rich tracts occupy residues 513–525 and 532–543; these read RSYEDSFGHDDRP and PDTESHPRRLSD.

Belongs to the velvet family. VeA subfamily. As to quaternary structure, component of the heterotrimeric velvet complex composed of laeA, veA and velB; VeA acting as a bridging protein between laeA and velB.

It is found in the nucleus. The protein localises to the cytoplasm. Its function is as follows. Component of the velvet transcription factor complex that controls sexual/asexual developmental ratio in response to light, promoting sexual development in the darkness while stimulating asexual sporulation under illumination. The velvet complex hat acts as a global regulator for secondary metabolite gene expression. Controls the expression of the aflatoxin gene cluster. Required for the expression of aflR and aflJ. Mediates the coordination of aflatoxigenic vesicles (aflatoxisomes) development with aflatoxin gene expression. Regulates branched chain amino acid and ethanol metabolism and acts as a positive regulator of mitochondrial and peroxisomal beta-oxidation. In Aspergillus parasiticus, this protein is Developmental and secondary metabolism regulator veA.